The chain runs to 193 residues: Ras-like protein 2 (193 aa).

12–19 (GGGGVGKS) contributes to the GTP binding site. An Effector region motif is present at residues 34 to 42 (YDPTIEDSY). GTP-binding positions include 59-63 (DTAGQ) and 118-121 (NKCD). The residue at position 190 (Cys-190) is a Cysteine methyl ester. Residue Cys-190 is the site of S-geranylgeranyl cysteine attachment. A propeptide spans 191–193 (KLL) (removed in mature form).

Belongs to the small GTPase superfamily. Ras family.

The protein localises to the cell membrane. It carries out the reaction GTP + H2O = GDP + phosphate + H(+). Its function is as follows. Ras proteins bind GDP/GTP and possess intrinsic GTPase activity. In Physarum polycephalum (Slime mold), this protein is Ras-like protein 2 (RAS-2).